A 156-amino-acid chain; its full sequence is ATP synthase subunit b (156 aa).

Residues 7–27 (LFAQLVVFFILAWFTMKFVWP) traverse the membrane as a helical segment.

Belongs to the ATPase B chain family. As to quaternary structure, F-type ATPases have 2 components, F(1) - the catalytic core - and F(0) - the membrane proton channel. F(1) has five subunits: alpha(3), beta(3), gamma(1), delta(1), epsilon(1). F(0) has four main subunits: a(1), b(2) and c(10-14). The alpha and beta chains form an alternating ring which encloses part of the gamma chain. F(1) is attached to F(0) by a central stalk formed by the gamma and epsilon chains, while a peripheral stalk is formed by the delta and b chains.

It is found in the cell inner membrane. Functionally, f(1)F(0) ATP synthase produces ATP from ADP in the presence of a proton or sodium gradient. F-type ATPases consist of two structural domains, F(1) containing the extramembraneous catalytic core and F(0) containing the membrane proton channel, linked together by a central stalk and a peripheral stalk. During catalysis, ATP synthesis in the catalytic domain of F(1) is coupled via a rotary mechanism of the central stalk subunits to proton translocation. In terms of biological role, component of the F(0) channel, it forms part of the peripheral stalk, linking F(1) to F(0). The chain is ATP synthase subunit b from Methylibium petroleiphilum (strain ATCC BAA-1232 / LMG 22953 / PM1).